A 76-amino-acid polypeptide reads, in one-letter code: Conopeptide X11.1 (76 aa).

The N-terminal stretch at 1-20 (MMKLSVSFLLLLMLLPFITG) is a signal peptide. The propeptide occupies 21-39 (EENSDSDVLKSGAAVRQGR). Disulfide bonds link Cys-42-Cys-56, Cys-49-Cys-61, Cys-55-Cys-66, and Cys-60-Cys-73.

As to expression, expressed by the venom duct.

It localises to the secreted. Antimicrobial peptide that potently inhibits growth of Mycobacterium tuberculosis (H37Rv strain) (MIC=3 uM). The chain is Conopeptide X11.1 from Conasprella ximenes (Interrupted cone).